Here is a 341-residue protein sequence, read N- to C-terminus: Tetraacyldisaccharide 4'-kinase (341 aa).

Thr-54–Thr-61 serves as a coordination point for ATP.

The protein belongs to the LpxK family.

It catalyses the reaction a lipid A disaccharide + ATP = a lipid IVA + ADP + H(+). The protein operates within glycolipid biosynthesis; lipid IV(A) biosynthesis; lipid IV(A) from (3R)-3-hydroxytetradecanoyl-[acyl-carrier-protein] and UDP-N-acetyl-alpha-D-glucosamine: step 6/6. Transfers the gamma-phosphate of ATP to the 4'-position of a tetraacyldisaccharide 1-phosphate intermediate (termed DS-1-P) to form tetraacyldisaccharide 1,4'-bis-phosphate (lipid IVA). The polypeptide is Tetraacyldisaccharide 4'-kinase (Mesorhizobium japonicum (strain LMG 29417 / CECT 9101 / MAFF 303099) (Mesorhizobium loti (strain MAFF 303099))).